A 129-amino-acid polypeptide reads, in one-letter code: Small ribosomal subunit protein uS11 (129 aa).

This sequence belongs to the universal ribosomal protein uS11 family. As to quaternary structure, part of the 30S ribosomal subunit. Interacts with proteins S7 and S18. Binds to IF-3.

Its function is as follows. Located on the platform of the 30S subunit, it bridges several disparate RNA helices of the 16S rRNA. Forms part of the Shine-Dalgarno cleft in the 70S ribosome. This chain is Small ribosomal subunit protein uS11, found in Staphylococcus saprophyticus subsp. saprophyticus (strain ATCC 15305 / DSM 20229 / NCIMB 8711 / NCTC 7292 / S-41).